A 389-amino-acid polypeptide reads, in one-letter code: Chorismate synthase (389 aa).

Positions 40 and 46 each coordinate NADP(+). FMN is bound by residues 130 to 132, 251 to 252, glycine 297, 312 to 316, and arginine 338; these read RAS, QA, and KPIST.

This sequence belongs to the chorismate synthase family. Homotetramer. FMNH2 serves as cofactor.

It carries out the reaction 5-O-(1-carboxyvinyl)-3-phosphoshikimate = chorismate + phosphate. The protein operates within metabolic intermediate biosynthesis; chorismate biosynthesis; chorismate from D-erythrose 4-phosphate and phosphoenolpyruvate: step 7/7. Functionally, catalyzes the anti-1,4-elimination of the C-3 phosphate and the C-6 proR hydrogen from 5-enolpyruvylshikimate-3-phosphate (EPSP) to yield chorismate, which is the branch point compound that serves as the starting substrate for the three terminal pathways of aromatic amino acid biosynthesis. This reaction introduces a second double bond into the aromatic ring system. The sequence is that of Chorismate synthase from Solibacter usitatus (strain Ellin6076).